We begin with the raw amino-acid sequence, 90 residues long: Antitoxin VapB35 (90 aa).

Positions 53 to 90 (GSVQPARVHGPAPRPTIPMRGGLDSGTLLERMRAEERY) are disordered.

It belongs to the phD/YefM antitoxin family.

Functionally, antitoxin component of a type II toxin-antitoxin (TA) system. Neutralizes the effect of cognate toxin VapC35. The protein is Antitoxin VapB35 (vapB35) of Mycobacterium tuberculosis (strain CDC 1551 / Oshkosh).